The chain runs to 1339 residues: DNA polymerase alpha catalytic subunit (1339 aa).

Disordered regions lie at residues 1 to 29 and 60 to 89; these read MEDW…SEEE and AKRR…HQQK. Residues 8–19 show a composition bias toward basic and acidic residues; that stretch reads RSEEQKRCEEKG. Zn(2+) contacts are provided by cysteine 1179, cysteine 1182, cysteine 1215, cysteine 1218, cysteine 1235, cysteine 1244, cysteine 1274, and cysteine 1289. Residues 1179-1218 form a CysA-type zinc finger; it reads CTHCQLVVPVDPHKYINDMFSSREKPPPTAPFELYVCFNC. The short motif at 1244 to 1274 is the CysB motif element; sequence CSGGNVASVRALRAQFTYLRAMFDVPQALNC.

It belongs to the DNA polymerase type-B family.

It is found in the nucleus. It carries out the reaction DNA(n) + a 2'-deoxyribonucleoside 5'-triphosphate = DNA(n+1) + diphosphate. Its function is as follows. Polymerase alpha in a complex with DNA primase is a replicative polymerase. This is DNA polymerase alpha catalytic subunit from Trypanosoma brucei brucei.